Here is a 398-residue protein sequence, read N- to C-terminus: Subtilisin-like protease CPC735_050320 (398 aa).

The first 19 residues, 1-19 (MVFLGKILPLALAALSVNG), serve as a signal peptide directing secretion. Positions 20-117 (AEILSAPGAE…IERDQIMKAS (98 aa)) are excised as a propeptide. The 81-residue stretch at 35–115 (YIVVMKEGTS…AYIERDQIMK (81 aa)) folds into the Inhibitor I9 domain. Positions 127–398 (SWGLARVSSR…NRLINNGVSQ (272 aa)) constitute a Peptidase S8 domain. Residues Asp-159 and His-190 each act as charge relay system in the active site. Residues Asn-220 and Asn-250 are each glycosylated (N-linked (GlcNAc...) asparagine). Ser-344 functions as the Charge relay system in the catalytic mechanism.

This sequence belongs to the peptidase S8 family.

It is found in the secreted. Secreted subtilisin-like serine protease with keratinolytic activity that contributes to pathogenicity. The sequence is that of Subtilisin-like protease CPC735_050320 from Coccidioides posadasii (strain C735) (Valley fever fungus).